We begin with the raw amino-acid sequence, 830 residues long: V-type proton ATPase 116 kDa subunit a 3 (830 aa).

The Cytoplasmic portion of the chain corresponds to 1 to 385 (MGSMFRSEEV…DAYGVGRYQE (385 aa)). The segment at 139–158 (QLAAAHTDGASERTPLLQAP) is disordered. The helical transmembrane segment at 386–404 (VNPAPYTIITFPFLFAVMF) threads the bilayer. Topologically, residues 405–406 (GD) are vacuolar. A helical membrane pass occupies residues 407–423 (VGHGLLMFLFALAMVLA). Topologically, residues 424–438 (ENRPAVKAAQNEIWQ) are cytoplasmic. A helical transmembrane segment spans residues 439–468 (TFFRGRYLLLLMGLFSIYTGFIYNECFSRA). Over 469-532 (TSIFPSGWSV…AANHLSFLNS (64 aa)) the chain is Vacuolar. A helical transmembrane segment spans residues 533-552 (FKMKMSVILGVVHMAFGVVL). Topologically, residues 553-570 (GVFNHVHFGQRHRLLLET) are cytoplasmic. Residues 571-591 (LPELTFLLGLFGYLVFLVIYK) form a helical membrane-spanning segment. Over 592 to 635 (WLCVWAARAASAPSILIHFINMFLFSHSPSNRLLYPRQEVVQAT) the chain is Vacuolar. Residues 636–655 (LVVLALAMVPILLLGTPLHL) form a helical membrane-spanning segment. The Cytoplasmic portion of the chain corresponds to 656 to 720 (LHRHRRRLRR…EVLMHQAIHT (65 aa)). Positions 681 to 701 (LPDASVNGWSSDEEKAGGLDD) are disordered. Residues 721–745 (IEFCLGCVSNTASYLRLWALSLAHA) traverse the membrane as a helical segment. Over 746 to 766 (QLSEVLWAMVMRIGLGLGREV) the chain is Vacuolar. A helical membrane pass occupies residues 767–807 (GVAAVVLVPIFAAFAVMTVAILLVMEGLSAFLHALRLHWVE). Residues 808 to 830 (FQNKFYSGTGYKLSPFTFAATDD) are Cytoplasmic-facing.

The protein belongs to the V-ATPase 116 kDa subunit family. In terms of assembly, V-ATPase is a heteromultimeric enzyme made up of two complexes: the ATP-hydrolytic V1 complex and the proton translocation V0 complex. The V1 complex consists of three catalytic AB heterodimers that form a heterohexamer, three peripheral stalks each consisting of EG heterodimers, one central rotor including subunits D and F, and the regulatory subunits C and H. The proton translocation complex V0 consists of the proton transport subunit a, a ring of proteolipid subunits c9c'', rotary subunit d, subunits e and f, and the accessory subunits ATP6AP1/Ac45 and ATP6AP2/PRR. Isoform long is highly expressed in osteoclastomas. Isoform short is highly expressed in thymus.

Its subcellular location is the membrane. Subunit of the V0 complex of vacuolar(H+)-ATPase (V-ATPase), a multisubunit enzyme composed of a peripheral complex (V1) that hydrolyzes ATP and a membrane integral complex (V0) that translocates protons. V-ATPase is responsible for acidifying and maintaining the pH of intracellular compartments and in some cell types, is targeted to the plasma membrane, where it is responsible for acidifying the extracellular environment. Seems to be directly involved in T-cell activation. The protein is V-type proton ATPase 116 kDa subunit a 3 (TCIRG1) of Homo sapiens (Human).